Consider the following 144-residue polypeptide: RxLR effector protein PITG_03192 (144 aa).

A signal peptide spans 1–24 (MRVGFVFALLVVSVIVCFNGLTSA). Residues 49 to 58 (RNLRASGEER) carry the RxLR-dEER motif. The N-linked (GlcNAc...) asparagine glycan is linked to Asn115. The helical transmembrane segment at 122-142 (FFILATLVMFPIGVWAVVTNY) threads the bilayer.

This sequence belongs to the RxLR effector family. In terms of assembly, interacts with the C-terminal portions the ER-associated potato NAC transcription factors NTP1 and NTP2.

The protein localises to the secreted. It localises to the host endoplasmic reticulum membrane. Effector that is required for full virulence. Targets host NTP1 and NTP2 transcription factors and prevents their pathogen-associated molecular pattern (PAMP)-triggered re-localization from the endoplasmic reticulum into the nucleus, where they contribute to prevent disease progression by P.infestans. The chain is RxLR effector protein PITG_03192 from Phytophthora infestans (strain T30-4) (Potato late blight agent).